The primary structure comprises 615 residues: Peptidoglycan-binding protein YepA (615 aa).

Residues 1–26 (MRNLAALLPALFLLGSSLLPAGTALA) form the signal peptide.

The protein belongs to the bacterial solute-binding protein 5 family. As to quaternary structure, the complex is composed of one ATP-binding protein (YejF), two transmembrane proteins (YejB and YejE) and a solute-binding protein (YepA).

Its subcellular location is the periplasm. Part of the ABC transporter complex YejBEF-YepA involved in the uptake of muropeptides, the breakdown products of cell wall peptidoglycan. The import of muropeptides into the cell enables peptidoglycan recycling, which is vital for cell wall integrity in this bacterium. Probably binds muropeptides. The protein is Peptidoglycan-binding protein YepA of Agrobacterium fabrum (strain C58 / ATCC 33970) (Agrobacterium tumefaciens (strain C58)).